The chain runs to 97 residues: Large ribosomal subunit protein eL21 (97 aa).

The tract at residues 1-26 (MQKSEGFRSKTRYKLQKHPRQKGMAP) is disordered. Basic residues predominate over residues 9–21 (SKTRYKLQKHPRQ).

This sequence belongs to the eukaryotic ribosomal protein eL21 family.

The sequence is that of Large ribosomal subunit protein eL21 from Methanococcus maripaludis (strain C6 / ATCC BAA-1332).